The primary structure comprises 284 residues: Polyamine aminopropyltransferase (284 aa).

The PABS domain maps to 2-237; sequence ELWYTEEQTQ…GYWLFGFASK (236 aa). Residue glutamine 31 coordinates S-methyl-5'-thioadenosine. Residues histidine 62 and aspartate 86 each coordinate spermidine. Residues glutamate 106 and 137 to 138 contribute to the S-methyl-5'-thioadenosine site; that span reads DG. Aspartate 155 acts as the Proton acceptor in catalysis. 155–158 serves as a coordination point for spermidine; it reads DSTD. Proline 162 is a binding site for S-methyl-5'-thioadenosine.

It belongs to the spermidine/spermine synthase family. Homodimer or homotetramer.

Its subcellular location is the cytoplasm. The enzyme catalyses S-adenosyl 3-(methylsulfanyl)propylamine + putrescine = S-methyl-5'-thioadenosine + spermidine + H(+). Its pathway is amine and polyamine biosynthesis; spermidine biosynthesis; spermidine from putrescine: step 1/1. Functionally, catalyzes the irreversible transfer of a propylamine group from the amino donor S-adenosylmethioninamine (decarboxy-AdoMet) to putrescine (1,4-diaminobutane) to yield spermidine. This Alkaliphilus metalliredigens (strain QYMF) protein is Polyamine aminopropyltransferase.